Reading from the N-terminus, the 224-residue chain is MAISDWPEQDRPRERLIKHGAAILTDAELLAIFLRLGVAGKSAVDLARDMLNHFGSLHALFSASLDDFSQLNGLGPAKYAQLQAVLELTRRSLSEELQIGISLNSPQAVKKYLQLLLGGKPYEAFAVLFLDVKNRLIACEELFRGTLTHTSVYPREIVKEALTHNAASVILAHNHPSGSSEPSAADHSLTQALKQALALIDVRVLDHFVVGGKNVYSFAEHGHL.

The region spanning 102–224 is the MPN domain; it reads SLNSPQAVKK…VYSFAEHGHL (123 aa). Zn(2+)-binding residues include His173, His175, and Asp186. A JAMM motif motif is present at residues 173-186; that stretch reads HNHPSGSSEPSAAD.

Belongs to the UPF0758 family.

In Janthinobacterium sp. (strain Marseille) (Minibacterium massiliensis), this protein is UPF0758 protein mma_2551.